A 495-amino-acid chain; its full sequence is N-succinylglutamate 5-semialdehyde dehydrogenase (495 aa).

An NAD(+)-binding site is contributed by 228–233 (GSYATG). Residues Glu251 and Cys285 contribute to the active site.

Belongs to the aldehyde dehydrogenase family. AstD subfamily.

It catalyses the reaction N-succinyl-L-glutamate 5-semialdehyde + NAD(+) + H2O = N-succinyl-L-glutamate + NADH + 2 H(+). The protein operates within amino-acid degradation; L-arginine degradation via AST pathway; L-glutamate and succinate from L-arginine: step 4/5. In terms of biological role, catalyzes the NAD-dependent reduction of succinylglutamate semialdehyde into succinylglutamate. This is N-succinylglutamate 5-semialdehyde dehydrogenase from Legionella pneumophila (strain Corby).